The following is a 221-amino-acid chain: DNA replication complex GINS protein SLD5 (221 aa).

The protein belongs to the GINS4/SLD5 family. Component of the GINS complex which is a heterotetramer of gins1/psf1, gins2/psf2, gins3/psf3 and gins4/sld5. Component of the CMG helicase complex, composed of the mcm2-7 complex, the GINS complex and cdc45.

It localises to the nucleus. It is found in the chromosome. The protein resides in the cytoplasm. In terms of biological role, required for initiation of chromosomal DNA replication. Core component of CDC45-MCM-GINS (CMG) helicase, the molecular machine that unwinds template DNA during replication, and around which the replisome is built. The protein is DNA replication complex GINS protein SLD5 of Xenopus laevis (African clawed frog).